The primary structure comprises 119 residues: MTQFDPATLRYDVNGLIPCIAQQEGTGEVLMMAWMNADSVARTLESGRVTYWSRSRQAFWVKGETSGHVQELVDLRVDCDRDCLLAVVRQTGPACHTNRRVCFYTSVTSGEEVELMAPE.

Position 78 (aspartate 78) interacts with Mg(2+). Residue cysteine 79 participates in Zn(2+) binding. Mg(2+) contacts are provided by aspartate 80 and aspartate 82. Zn(2+) contacts are provided by cysteine 95 and cysteine 102.

This sequence belongs to the PRA-CH family. Homodimer. The cofactor is Mg(2+). Requires Zn(2+) as cofactor.

It localises to the cytoplasm. It catalyses the reaction 1-(5-phospho-beta-D-ribosyl)-5'-AMP + H2O = 1-(5-phospho-beta-D-ribosyl)-5-[(5-phospho-beta-D-ribosylamino)methylideneamino]imidazole-4-carboxamide. The protein operates within amino-acid biosynthesis; L-histidine biosynthesis; L-histidine from 5-phospho-alpha-D-ribose 1-diphosphate: step 3/9. In terms of biological role, catalyzes the hydrolysis of the adenine ring of phosphoribosyl-AMP. The polypeptide is Phosphoribosyl-AMP cyclohydrolase (Jannaschia sp. (strain CCS1)).